The sequence spans 246 residues: Enolase-phosphatase E1 (246 aa).

Mg(2+)-binding residues include Asp-15 and Glu-17. Residues 134–135 and Lys-174 each bind substrate; that span reads SS. Asp-201 contributes to the Mg(2+) binding site.

The protein belongs to the HAD-like hydrolase superfamily. MasA/MtnC family. Monomer. Requires Mg(2+) as cofactor.

The protein localises to the cytoplasm. Its subcellular location is the nucleus. It catalyses the reaction 5-methylsulfanyl-2,3-dioxopentyl phosphate + H2O = 1,2-dihydroxy-5-(methylsulfanyl)pent-1-en-3-one + phosphate. The protein operates within amino-acid biosynthesis; L-methionine biosynthesis via salvage pathway; L-methionine from S-methyl-5-thio-alpha-D-ribose 1-phosphate: step 3/6. It participates in amino-acid biosynthesis; L-methionine biosynthesis via salvage pathway; L-methionine from S-methyl-5-thio-alpha-D-ribose 1-phosphate: step 4/6. Its function is as follows. Bifunctional enzyme that catalyzes the enolization of 2,3-diketo-5-methylthiopentyl-1-phosphate (DK-MTP-1-P) into the intermediate 2-hydroxy-3-keto-5-methylthiopentenyl-1-phosphate (HK-MTPenyl-1-P), which is then dephosphorylated to form the acireductone 1,2-dihydroxy-3-keto-5-methylthiopentene (DHK-MTPene). This is Enolase-phosphatase E1 from Debaryomyces hansenii (strain ATCC 36239 / CBS 767 / BCRC 21394 / JCM 1990 / NBRC 0083 / IGC 2968) (Yeast).